Consider the following 513-residue polypeptide: ATP synthase subunit alpha (513 aa).

Position 169 to 176 (169 to 176 (GDRQTGKT)) interacts with ATP.

It belongs to the ATPase alpha/beta chains family. As to quaternary structure, F-type ATPases have 2 components, CF(1) - the catalytic core - and CF(0) - the membrane proton channel. CF(1) has five subunits: alpha(3), beta(3), gamma(1), delta(1), epsilon(1). CF(0) has three main subunits: a(1), b(2) and c(9-12). The alpha and beta chains form an alternating ring which encloses part of the gamma chain. CF(1) is attached to CF(0) by a central stalk formed by the gamma and epsilon chains, while a peripheral stalk is formed by the delta and b chains.

Its subcellular location is the cell inner membrane. It carries out the reaction ATP + H2O + 4 H(+)(in) = ADP + phosphate + 5 H(+)(out). Produces ATP from ADP in the presence of a proton gradient across the membrane. The alpha chain is a regulatory subunit. The polypeptide is ATP synthase subunit alpha (Actinobacillus pleuropneumoniae serotype 7 (strain AP76)).